Reading from the N-terminus, the 89-residue chain is Small ribosomal subunit protein bS20 (89 aa).

A disordered region spans residues 1–26 (MANSAQARKRARQADGQRSHNASLRS).

The protein belongs to the bacterial ribosomal protein bS20 family.

Binds directly to 16S ribosomal RNA. The chain is Small ribosomal subunit protein bS20 from Dechloromonas aromatica (strain RCB).